We begin with the raw amino-acid sequence, 339 residues long: DNA-directed RNA polymerase subunit alpha (339 aa).

Residues 1–233 (MVREEVAGST…DLFLPFLHAE (233 aa)) are alpha N-terminal domain (alpha-NTD). Residues 264-339 (KKGIPLNCIF…IDLLKNKLSF (76 aa)) are alpha C-terminal domain (alpha-CTD).

This sequence belongs to the RNA polymerase alpha chain family. In terms of assembly, in plastids the minimal PEP RNA polymerase catalytic core is composed of four subunits: alpha, beta, beta', and beta''. When a (nuclear-encoded) sigma factor is associated with the core the holoenzyme is formed, which can initiate transcription.

The protein resides in the plastid. It localises to the chloroplast. It catalyses the reaction RNA(n) + a ribonucleoside 5'-triphosphate = RNA(n+1) + diphosphate. Its function is as follows. DNA-dependent RNA polymerase catalyzes the transcription of DNA into RNA using the four ribonucleoside triphosphates as substrates. The protein is DNA-directed RNA polymerase subunit alpha of Bromus inermis (Smooth brome grass).